An 80-amino-acid chain; its full sequence is Small ribosomal subunit protein bS18 (80 aa).

It belongs to the bacterial ribosomal protein bS18 family. As to quaternary structure, part of the 30S ribosomal subunit. Forms a tight heterodimer with protein bS6.

Functionally, binds as a heterodimer with protein bS6 to the central domain of the 16S rRNA, where it helps stabilize the platform of the 30S subunit. The protein is Small ribosomal subunit protein bS18 of Methylocella silvestris (strain DSM 15510 / CIP 108128 / LMG 27833 / NCIMB 13906 / BL2).